The chain runs to 110 residues: Protein SPIRAL1-like 2 (110 aa).

The disordered stretch occupies residues 28-110; the sequence is AVNKTPAETE…LDYLFGGGSN (83 aa). The span at 40–52 shows a compositional bias: low complexity; it reads AHAPPTQAAAANA. Over residues 63–82 the composition is skewed to polar residues; the sequence is LNSNSANNYMRAEGQNTGNF. Ser-67 bears the Phosphoserine mark. Positions 95 to 110 are enriched in gly residues; it reads PGGGSSLDYLFGGGSN.

The protein belongs to the SPIRAL1 family. Ubiquitous.

In terms of biological role, acts redundantly with SPR1 in maintaining the cortical microtubules organization essential for anisotropic cell growth. In Arabidopsis thaliana (Mouse-ear cress), this protein is Protein SPIRAL1-like 2 (SP1L2).